Consider the following 272-residue polypeptide: Hemin import ATP-binding protein HmuV (272 aa).

One can recognise an ABC transporter domain in the interval 2-255 (LNADHLHVAR…EPIARCYGFR (254 aa)). 34–41 (GRNGAGKS) lines the ATP pocket.

This sequence belongs to the ABC transporter superfamily. Heme (hemin) importer (TC 3.A.1.14.5) family. As to quaternary structure, the complex is composed of two ATP-binding proteins (HmuV), two transmembrane proteins (HmuU) and a solute-binding protein (HmuT).

It is found in the cell inner membrane. Functionally, part of the ABC transporter complex HmuTUV involved in hemin import. Responsible for energy coupling to the transport system. The sequence is that of Hemin import ATP-binding protein HmuV from Burkholderia pseudomallei (strain 1710b).